Reading from the N-terminus, the 219-residue chain is Ribose-5-phosphate isomerase A (219 aa).

Residues 28 to 31 (TGST), 81 to 84 (DGAD), and 94 to 97 (KGGG) each bind substrate. Catalysis depends on Glu-103, which acts as the Proton acceptor. Lys-121 contributes to the substrate binding site.

It belongs to the ribose 5-phosphate isomerase family. Homodimer.

The catalysed reaction is aldehydo-D-ribose 5-phosphate = D-ribulose 5-phosphate. It functions in the pathway carbohydrate degradation; pentose phosphate pathway; D-ribose 5-phosphate from D-ribulose 5-phosphate (non-oxidative stage): step 1/1. Functionally, catalyzes the reversible conversion of ribose-5-phosphate to ribulose 5-phosphate. This chain is Ribose-5-phosphate isomerase A, found in Shewanella oneidensis (strain ATCC 700550 / JCM 31522 / CIP 106686 / LMG 19005 / NCIMB 14063 / MR-1).